The following is a 72-amino-acid chain: MAKDDVIEVEGKVVDTMPNAMFTVELENGHQILATVSGKIRKNYIRILAGDRVTVEMSPYDLTRGRITYRFK.

Residues 1 to 72 (MAKDDVIEVE…TRGRITYRFK (72 aa)) enclose the S1-like domain.

It belongs to the IF-1 family. In terms of assembly, component of the 30S ribosomal translation pre-initiation complex which assembles on the 30S ribosome in the order IF-2 and IF-3, IF-1 and N-formylmethionyl-tRNA(fMet); mRNA recruitment can occur at any time during PIC assembly.

Its subcellular location is the cytoplasm. One of the essential components for the initiation of protein synthesis. Stabilizes the binding of IF-2 and IF-3 on the 30S subunit to which N-formylmethionyl-tRNA(fMet) subsequently binds. Helps modulate mRNA selection, yielding the 30S pre-initiation complex (PIC). Upon addition of the 50S ribosomal subunit IF-1, IF-2 and IF-3 are released leaving the mature 70S translation initiation complex. The polypeptide is Translation initiation factor IF-1 (Streptococcus pneumoniae serotype 2 (strain D39 / NCTC 7466)).